The primary structure comprises 124 residues: Fluoride-specific ion channel FluC (124 aa).

A run of 4 helical transmembrane segments spans residues Val-4–Leu-24, Phe-35–Gly-55, Pro-62–Phe-82, and Leu-95–Leu-115. Na(+) is bound by residues Gly-74 and Thr-77.

It belongs to the fluoride channel Fluc/FEX (TC 1.A.43) family.

It localises to the cell inner membrane. It catalyses the reaction fluoride(in) = fluoride(out). Na(+) is not transported, but it plays an essential structural role and its presence is essential for fluoride channel function. In terms of biological role, fluoride-specific ion channel. Important for reducing fluoride concentration in the cell, thus reducing its toxicity. This chain is Fluoride-specific ion channel FluC, found in Shewanella halifaxensis (strain HAW-EB4).